The primary structure comprises 502 residues: MAYFRRNFYGGRRHYYRRRNAYTRRRYRRVRRRHRGRRFPYFKQGKRRRTRLLHVTDPRYKAHCTITGWVPIAMTRIQLISQPFTVDTLSPFHVYPGGYGYGVFTLEAMYKEHLMKRNRWSRSNAGFDLGRYLGTWLTLVPHPYFSYLFYYDPEYGNTFEFKKLIHPAIMITHPKTILVLSNKRGGNRRKWPRMWIPRPAIFADGWEFQKDLCQHGLFAFGWAWVDLDRPWMADISKPAQTIDPSTYDKKNDMINKVPNMWWKEAANDWLTEWGRPQGSGVTQQFNQLAMAGPFVLKTNKSEYVNTELLQIILFYKSHFQWGGEFLQDKVLADPTKIPPAQTAYYQQAGQTNLYGSPYKPLSSGLHDSISELPIASPPQNPHKYTVRPSDYDKDGILTEESFRRLTDSPYTSDGGHSFSSFSTASDPLEGTSRYARPLGRKTTREPSRRRKRRRRSPSPEDEETAPIPPKSNSEPSISGPGRATRKQLLQRLFRRLLTSSPQ.

2 disordered regions span residues 369–392 (ISEL…SDYD) and 405–487 (LTDS…TRKQ). A compositionally biased stretch (basic residues) spans 447-456 (SRRRKRRRRS).

It belongs to the anelloviridae capsid protein family.

Its subcellular location is the virion. In terms of biological role, self-assembles to form an icosahedral capsid with a T=1 symmetry, about 30 nm in diameter, and consisting of 60 capsid proteins. The capsid encapsulates the genomic DNA. Capsid protein is involved in attachment and entry into the host cell. The sequence is that of Capsid protein from Tupaia.